Consider the following 274-residue polypeptide: Large ribosomal subunit protein uL2 (274 aa).

Disordered regions lie at residues Ala-28–Ile-54 and Val-224–Lys-274. Residues Lys-263 to Lys-274 show a composition bias toward basic and acidic residues.

The protein belongs to the universal ribosomal protein uL2 family. In terms of assembly, part of the 50S ribosomal subunit. Forms a bridge to the 30S subunit in the 70S ribosome.

One of the primary rRNA binding proteins. Required for association of the 30S and 50S subunits to form the 70S ribosome, for tRNA binding and peptide bond formation. It has been suggested to have peptidyltransferase activity; this is somewhat controversial. Makes several contacts with the 16S rRNA in the 70S ribosome. In Pseudomonas fluorescens (strain SBW25), this protein is Large ribosomal subunit protein uL2.